Reading from the N-terminus, the 439-residue chain is Lipid-A-disaccharide synthase (439 aa).

Positions 1–35 are disordered; it reads MKEIGNRESGIVDGQRNGASVGSDPTALPIPHSPL.

This sequence belongs to the LpxB family.

The enzyme catalyses a lipid X + a UDP-2-N,3-O-bis[(3R)-3-hydroxyacyl]-alpha-D-glucosamine = a lipid A disaccharide + UDP + H(+). It functions in the pathway bacterial outer membrane biogenesis; LPS lipid A biosynthesis. Functionally, condensation of UDP-2,3-diacylglucosamine and 2,3-diacylglucosamine-1-phosphate to form lipid A disaccharide, a precursor of lipid A, a phosphorylated glycolipid that anchors the lipopolysaccharide to the outer membrane of the cell. The sequence is that of Lipid-A-disaccharide synthase from Xanthomonas euvesicatoria pv. vesicatoria (strain 85-10) (Xanthomonas campestris pv. vesicatoria).